The following is a 2839-amino-acid chain: Neurofibromin (2839 aa).

Ala2 carries the N-acetylalanine modification. Phosphoserine is present on residues Ser864 and Ser876. One can recognise a Ras-GAP domain in the interval 1251–1482; the sequence is HLLYQLLWNM…DAARRFFLDI (232 aa). Positions 1580–1738 constitute a CRAL-TRIO domain; sequence EKEEFKALKT…ATLALEEDLK (159 aa). Residues 1580 to 1837 form a lipid binding region; it reads EKEEFKALKT…RTRWELSQPD (258 aa). Residues Ser2188 and Ser2467 each carry the phosphoserine modification. Thr2514 is modified (phosphothreonine). Ser2515, Ser2521, Ser2523, and Ser2543 each carry phosphoserine. The Bipartite nuclear localization signal motif lies at 2555 to 2571; it reads KRQEMESGITTPPKMRR. Thr2565 carries the phosphothreonine modification. Residues Ser2597, Ser2802, and Ser2817 each carry the phosphoserine modification. The interval 2787–2839 is disordered; sequence TSQHSPGIDKENVELSPTTGHCNSGRTRHGSASQVQKQRSAGSFKRNSIKKIV. The span at 2801–2827 shows a compositional bias: polar residues; that stretch reads LSPTTGHCNSGRTRHGSASQVQKQRSA.

Interacts with HTR6. Interacts with SPRED2. Ubiquitinated by RNF7/RBX2, leading to its degradation. In terms of tissue distribution, detected in brain, peripheral nerve, lung, colon and muscle.

It is found in the nucleus. It localises to the nucleolus. Its subcellular location is the cell membrane. Functionally, stimulates the GTPase activity of Ras. NF1 shows greater affinity for Ras GAP, but lower specific activity. May be a regulator of Ras activity. This is Neurofibromin (NF1) from Homo sapiens (Human).